A 397-amino-acid chain; its full sequence is MIEQSLSKPSFSLSIPIPKAPKSKSSFFCSYSKIRCESVDYPSLTKIDAKHPQNSTTINNGSSSSASVDLKNNEKGPYPYPGGGKMGPYTGRDLNEKKPEWLRQRAPQGERFEEVKESISRLNLNTVCQEAQCPNIGECWNGGGDGIATATIMVLGDTCTRGCRFCAVKTSRTPPPPDPMEPLNTALAIASWGVDYIVITSVDRDDLSDGGSGHFAQTVRAMKELKPEIMVECLTSDFRGDLKAVDTLVHSGLDVFAHNVETVKRLQRIVRDPRAGYEQSLSVLKHAKVSKKGMITKTSIMLGLGETDDEVKEAMTDLRAIDVDILTFGQYLQPTPLHLTVKEYVSPEKFAYWKEYGESIGFRYVASGPLVRSSYRAGELFVKTMVKESAKEAAAIS.

Residues 1–35 (MIEQSLSKPSFSLSIPIPKAPKSKSSFFCSYSKIR) constitute a chloroplast transit peptide. A disordered region spans residues 49–85 (AKHPQNSTTINNGSSSSASVDLKNNEKGPYPYPGGGK). A compositionally biased stretch (low complexity) spans 54–67 (NSTTINNGSSSSAS). [4Fe-4S] cluster contacts are provided by C128, C133, C139, C159, C163, C166, and S374. The Radical SAM core domain occupies 142–363 (GGGDGIATAT…KEYGESIGFR (222 aa)).

The protein belongs to the radical SAM superfamily. Lipoyl synthase family. Requires [4Fe-4S] cluster as cofactor.

The protein resides in the plastid. The protein localises to the chloroplast. It carries out the reaction [[Fe-S] cluster scaffold protein carrying a second [4Fe-4S](2+) cluster] + N(6)-octanoyl-L-lysyl-[protein] + 2 oxidized [2Fe-2S]-[ferredoxin] + 2 S-adenosyl-L-methionine + 4 H(+) = [[Fe-S] cluster scaffold protein] + N(6)-[(R)-dihydrolipoyl]-L-lysyl-[protein] + 4 Fe(3+) + 2 hydrogen sulfide + 2 5'-deoxyadenosine + 2 L-methionine + 2 reduced [2Fe-2S]-[ferredoxin]. The protein operates within protein modification; protein lipoylation via endogenous pathway; protein N(6)-(lipoyl)lysine from octanoyl-[acyl-carrier-protein]: step 2/2. Functionally, catalyzes the radical-mediated insertion of two sulfur atoms into the C-6 and C-8 positions of the octanoyl moiety bound to the lipoyl domains of lipoate-dependent enzymes, thereby converting the octanoylated domains into lipoylated derivatives. The sequence is that of Lipoyl synthase 2, chloroplastic from Populus trichocarpa (Western balsam poplar).